Reading from the N-terminus, the 800-residue chain is Phenylalanine--tRNA ligase beta subunit (800 aa).

In terms of domain architecture, tRNA-binding spans 39 to 154 (SKDIKNLVVG…TEVEPGTDAL (116 aa)). The B5 domain occupies 408–483 (SFVTPIDITA…RIYGYDEIPS (76 aa)). Residues Asp461, Asp467, Glu470, and Glu471 each coordinate Mg(2+). Residues 708–800 (PKFPGVTRDI…ALQAQGATIR (93 aa)) enclose the FDX-ACB domain.

Belongs to the phenylalanyl-tRNA synthetase beta subunit family. Type 1 subfamily. In terms of assembly, tetramer of two alpha and two beta subunits. The cofactor is Mg(2+).

Its subcellular location is the cytoplasm. It carries out the reaction tRNA(Phe) + L-phenylalanine + ATP = L-phenylalanyl-tRNA(Phe) + AMP + diphosphate + H(+). This is Phenylalanine--tRNA ligase beta subunit from Staphylococcus haemolyticus (strain JCSC1435).